The following is a 612-amino-acid chain: Protein tipD (612 aa).

Positions 95 to 128 (RNEKKTQQQPPSGSSKMDSSSSSSSSNRVSGMGS) are disordered. Over residues 106–128 (SGSSKMDSSSSSSSSNRVSGMGS) the composition is skewed to low complexity. WD repeat units follow at residues 322-361 (GHNS…QKST), 364-403 (GASQ…SRHT), 406-444 (GHIG…CTRT), 447-486 (CFSS…PTQV), 490-530 (IHEG…TIRT), 535-576 (EYRN…TVKV), and 582-611 (NNGS…IIQW).

This sequence belongs to the WD repeat tipD family.

Not known; disruption of the gene for tipD results in morphological defects. This chain is Protein tipD (tipD), found in Dictyostelium discoideum (Social amoeba).